Consider the following 493-residue polypeptide: Glutamyl-tRNA(Gln) amidotransferase subunit A (493 aa).

Catalysis depends on charge relay system residues Lys78 and Ser158. Ser182 acts as the Acyl-ester intermediate in catalysis.

It belongs to the amidase family. GatA subfamily. As to quaternary structure, heterotrimer of A, B and C subunits.

It carries out the reaction L-glutamyl-tRNA(Gln) + L-glutamine + ATP + H2O = L-glutaminyl-tRNA(Gln) + L-glutamate + ADP + phosphate + H(+). Its function is as follows. Allows the formation of correctly charged Gln-tRNA(Gln) through the transamidation of misacylated Glu-tRNA(Gln) in organisms which lack glutaminyl-tRNA synthetase. The reaction takes place in the presence of glutamine and ATP through an activated gamma-phospho-Glu-tRNA(Gln). This chain is Glutamyl-tRNA(Gln) amidotransferase subunit A, found in Rickettsia felis (strain ATCC VR-1525 / URRWXCal2) (Rickettsia azadi).